Reading from the N-terminus, the 625-residue chain is Arginine--tRNA ligase (625 aa).

Positions 117–127 (ANPIHPLHIGH) match the 'HIGH' region motif.

Belongs to the class-I aminoacyl-tRNA synthetase family.

The protein localises to the cytoplasm. The catalysed reaction is tRNA(Arg) + L-arginine + ATP = L-arginyl-tRNA(Arg) + AMP + diphosphate. This is Arginine--tRNA ligase from Saccharolobus solfataricus (strain ATCC 35092 / DSM 1617 / JCM 11322 / P2) (Sulfolobus solfataricus).